Here is a 449-residue protein sequence, read N- to C-terminus: Integrator complex subunit 15 (449 aa).

The protein belongs to the Integrator subunit 15 family. As to quaternary structure, component of the Integrator complex, composed of core subunits INTS1, INTS2, INTS3, INTS4, INTS5, INTS6, INTS7, INTS8, INTS9/RC74, INTS10, INTS11/CPSF3L, INTS12, INTS13, INTS14 and INTS15. The core complex associates with protein phosphatase 2A subunits PPP2CA and PPP2R1A, to form the Integrator-PP2A (INTAC) complex. INTS15 is part of the tail subcomplex, composed of INTS10, INTS13, INTS14 and INTS15.

Its subcellular location is the nucleus. It is found in the chromosome. Its function is as follows. Component of the integrator complex, a multiprotein complex that terminates RNA polymerase II (Pol II) transcription in the promoter-proximal region of genes. The integrator complex provides a quality checkpoint during transcription elongation by driving premature transcription termination of transcripts that are unfavorably configured for transcriptional elongation: the complex terminates transcription by (1) catalyzing dephosphorylation of the C-terminal domain (CTD) of Pol II subunit POLR2A/RPB1 and SUPT5H/SPT5, (2) degrading the exiting nascent RNA transcript via endonuclease activity and (3) promoting the release of Pol II from bound DNA. The integrator complex is also involved in terminating the synthesis of non-coding Pol II transcripts, such as enhancer RNAs (eRNAs), small nuclear RNAs (snRNAs), telomerase RNAs and long non-coding RNAs (lncRNAs). INTS15 is part of the integrator tail module that acts as a platform for the recruitment of transcription factors at promoters. Within the integrator complex, INTS15 is required to bridge different integrator modules. In Homo sapiens (Human), this protein is Integrator complex subunit 15.